Reading from the N-terminus, the 500-residue chain is NADH-quinone oxidoreductase subunit N (500 aa).

A run of 14 helical transmembrane segments spans residues 6–26 (SWIA…IALV), 40–60 (ALTL…ALGG), 69–89 (MVVV…ALMI), 106–125 (GGEF…VMIS), 129–151 (FLVL…ALRR), 164–184 (FVLG…LYGA), 207–227 (LVFG…AVPF), 239–259 (PTAV…AMTI), 276–296 (MLAL…VAQT), 302–322 (LAFS…AGVV), 337–357 (MFYA…ILLL), 380–400 (YAGV…LVGF), 417–437 (SYLV…FYYL), and 464–484 (IVLA…SSLM).

The protein belongs to the complex I subunit 2 family. NDH-1 is composed of 14 different subunits. Subunits NuoA, H, J, K, L, M, N constitute the membrane sector of the complex.

The protein resides in the cell inner membrane. The enzyme catalyses a quinone + NADH + 5 H(+)(in) = a quinol + NAD(+) + 4 H(+)(out). In terms of biological role, NDH-1 shuttles electrons from NADH, via FMN and iron-sulfur (Fe-S) centers, to quinones in the respiratory chain. The immediate electron acceptor for the enzyme in this species is believed to be ubiquinone. Couples the redox reaction to proton translocation (for every two electrons transferred, four hydrogen ions are translocated across the cytoplasmic membrane), and thus conserves the redox energy in a proton gradient. This Polaromonas naphthalenivorans (strain CJ2) protein is NADH-quinone oxidoreductase subunit N.